A 172-amino-acid polypeptide reads, in one-letter code: Shikimate kinase (172 aa).

14–19 (GAGKST) contacts ATP. Residue Ser-18 participates in Mg(2+) binding. Substrate-binding residues include Asp-36, Arg-60, and Gly-82. An ATP-binding site is contributed by Arg-120. Arg-139 provides a ligand contact to substrate. Position 156 (Gln-156) interacts with ATP.

It belongs to the shikimate kinase family. As to quaternary structure, monomer. It depends on Mg(2+) as a cofactor.

It localises to the cytoplasm. It carries out the reaction shikimate + ATP = 3-phosphoshikimate + ADP + H(+). The protein operates within metabolic intermediate biosynthesis; chorismate biosynthesis; chorismate from D-erythrose 4-phosphate and phosphoenolpyruvate: step 5/7. In terms of biological role, catalyzes the specific phosphorylation of the 3-hydroxyl group of shikimic acid using ATP as a cosubstrate. This is Shikimate kinase from Vibrio parahaemolyticus serotype O3:K6 (strain RIMD 2210633).